The sequence spans 227 residues: Lipoprotein-releasing system ATP-binding protein LolD (227 aa).

Positions 5–227 (LICQNITKHY…QDGILRESNS (223 aa)) constitute an ABC transporter domain. ATP is bound at residue 41 to 48 (GSSGSGKS).

The protein belongs to the ABC transporter superfamily. Lipoprotein translocase (TC 3.A.1.125) family. In terms of assembly, the complex is composed of two ATP-binding proteins (LolD) and two transmembrane proteins (LolC and LolE).

Its subcellular location is the cell inner membrane. In terms of biological role, part of the ABC transporter complex LolCDE involved in the translocation of mature outer membrane-directed lipoproteins, from the inner membrane to the periplasmic chaperone, LolA. Responsible for the formation of the LolA-lipoprotein complex in an ATP-dependent manner. The polypeptide is Lipoprotein-releasing system ATP-binding protein LolD (Histophilus somni (strain 129Pt) (Haemophilus somnus)).